Reading from the N-terminus, the 56-residue chain is Small ribosomal subunit protein uS14 (56 aa).

Cys21, Cys24, Cys39, and Cys42 together coordinate Zn(2+).

Belongs to the universal ribosomal protein uS14 family. As to quaternary structure, component of the small ribosomal subunit. Mature ribosomes consist of a small (40S) and a large (60S) subunit. The 40S subunit contains about 32 different proteins and 1 molecule of RNA (18S). The 60S subunit contains 45 different proteins and 3 molecules of RNA (25S, 5.8S and 5S). It depends on Zn(2+) as a cofactor.

The protein resides in the cytoplasm. Functionally, component of the ribosome, a large ribonucleoprotein complex responsible for the synthesis of proteins in the cell. The small ribosomal subunit (SSU) binds messenger RNAs (mRNAs) and translates the encoded message by selecting cognate aminoacyl-transfer RNA (tRNA) molecules. The large subunit (LSU) contains the ribosomal catalytic site termed the peptidyl transferase center (PTC), which catalyzes the formation of peptide bonds, thereby polymerizing the amino acids delivered by tRNAs into a polypeptide chain. The nascent polypeptides leave the ribosome through a tunnel in the LSU and interact with protein factors that function in enzymatic processing, targeting, and the membrane insertion of nascent chains at the exit of the ribosomal tunnel. The chain is Small ribosomal subunit protein uS14 from Candida albicans (strain SC5314 / ATCC MYA-2876) (Yeast).